The sequence spans 245 residues: rRNA adenine N-6-methyltransferase (245 aa).

Residues N10, L12, G37, E58, D83, and S100 each coordinate S-adenosyl-L-methionine.

This sequence belongs to the class I-like SAM-binding methyltransferase superfamily. rRNA adenine N(6)-methyltransferase family.

It catalyses the reaction adenosine(2085) in 23S rRNA + 2 S-adenosyl-L-methionine = N(6)-dimethyladenosine(2085) in 23S rRNA + 2 S-adenosyl-L-homocysteine + 2 H(+). This protein produces a dimethylation of the adenine residue at position 2085 in 23S rRNA, resulting in reduced affinity between ribosomes and macrolide-lincosamide-streptogramin B antibiotics. The polypeptide is rRNA adenine N-6-methyltransferase (ermBP) (Clostridium perfringens).